The sequence spans 1142 residues: Error-prone DNA polymerase (1142 aa).

The disordered stretch occupies residues 291–361 (TSSPAQAARE…GTGAAAGTDR (71 aa)). Low complexity-rich tracts occupy residues 311-320 (LRASLPAERP) and 327-344 (GPAA…PGEP). Residues 345–355 (GLAGAGGGTGA) are compositionally biased toward gly residues.

This sequence belongs to the DNA polymerase type-C family. DnaE2 subfamily.

It is found in the cytoplasm. It catalyses the reaction DNA(n) + a 2'-deoxyribonucleoside 5'-triphosphate = DNA(n+1) + diphosphate. Functionally, DNA polymerase involved in damage-induced mutagenesis and translesion synthesis (TLS). It is not the major replicative DNA polymerase. The protein is Error-prone DNA polymerase of Anaeromyxobacter dehalogenans (strain 2CP-1 / ATCC BAA-258).